Here is a 201-residue protein sequence, read N- to C-terminus: Dephospho-CoA kinase (201 aa).

Positions 4-201 constitute a DPCK domain; that stretch reads IIGITGGIAS…LEGGRQDDRD (198 aa). ATP is bound at residue 12 to 17; the sequence is ASGKST.

Belongs to the CoaE family.

It is found in the cytoplasm. It carries out the reaction 3'-dephospho-CoA + ATP = ADP + CoA + H(+). Its pathway is cofactor biosynthesis; coenzyme A biosynthesis; CoA from (R)-pantothenate: step 5/5. Catalyzes the phosphorylation of the 3'-hydroxyl group of dephosphocoenzyme A to form coenzyme A. The polypeptide is Dephospho-CoA kinase (Streptococcus pneumoniae (strain ATCC BAA-255 / R6)).